Here is a 322-residue protein sequence, read N- to C-terminus: Elongation factor P--(R)-beta-lysine ligase (322 aa).

Substrate is bound at residue 75–77 (SPE). 99 to 101 (RNE) is an ATP binding site. Tyrosine 117 is a substrate binding site. An ATP-binding site is contributed by 241–242 (EL). Residue glutamate 248 participates in substrate binding. An ATP-binding site is contributed by glycine 297.

The protein belongs to the class-II aminoacyl-tRNA synthetase family. EpmA subfamily. In terms of assembly, homodimer.

It catalyses the reaction D-beta-lysine + L-lysyl-[protein] + ATP = N(6)-((3R)-3,6-diaminohexanoyl)-L-lysyl-[protein] + AMP + diphosphate + H(+). With EpmB is involved in the beta-lysylation step of the post-translational modification of translation elongation factor P (EF-P). Catalyzes the ATP-dependent activation of (R)-beta-lysine produced by EpmB, forming a lysyl-adenylate, from which the beta-lysyl moiety is then transferred to the epsilon-amino group of a conserved specific lysine residue in EF-P. This is Elongation factor P--(R)-beta-lysine ligase from Avibacterium paragallinarum (Haemophilus gallinarum).